We begin with the raw amino-acid sequence, 334 residues long: MTSDELSFVHDAVLLQEAVAAVLGVKALPKQTDDESQNSLQASGIYVDATFGRGGHSRLLLSQLADNATLIVFDKDPTAIRVAQELASTDSRVQVVHDSFATLTDSLAAMGITQVDGLMADLGISSPQIDDGSRGFSFMRDGAVDMRMDTSRGQSVAEWLETVDDDTLANVLYDFGEERHSRRIARAIKQMDRYKSTLELAEVIKVAHPNWQRGKHPATQSFQAMRIFINNELGDVDNFLEQSIPILKVGGQLAVISFHSLEDRRIKQFLQRHSKGQYPEDENLPMPPKRPRYFSKPKRVGPSKAEISNNPRSRSAWLRMATRTDTDYLADIEP.

Residues 54-56, aspartate 74, phenylalanine 100, aspartate 121, and glutamine 128 each bind S-adenosyl-L-methionine; that span reads GGH. The disordered stretch occupies residues 272–318; the sequence is RHSKGQYPEDENLPMPPKRPRYFSKPKRVGPSKAEISNNPRSRSAWL. Positions 289-301 are enriched in basic residues; the sequence is KRPRYFSKPKRVG.

This sequence belongs to the methyltransferase superfamily. RsmH family.

It localises to the cytoplasm. The enzyme catalyses cytidine(1402) in 16S rRNA + S-adenosyl-L-methionine = N(4)-methylcytidine(1402) in 16S rRNA + S-adenosyl-L-homocysteine + H(+). Its function is as follows. Specifically methylates the N4 position of cytidine in position 1402 (C1402) of 16S rRNA. In Psychrobacter arcticus (strain DSM 17307 / VKM B-2377 / 273-4), this protein is Ribosomal RNA small subunit methyltransferase H.